A 625-amino-acid chain; its full sequence is Protein arginine N-methyltransferase skb1 (625 aa).

In terms of domain architecture, SAM-dependent MTase PRMT-type spans 280–588; the sequence is LQVPLQPLSY…WRLTDGMRVW (309 aa). Residues tyrosine 296, 305 to 306, glutamate 359, and 386 to 387 contribute to the S-adenosyl-L-methionine site; these read KY and DM. Active-site proton donor/acceptor residues include glutamate 402 and glutamate 411.

Belongs to the class I-like SAM-binding methyltransferase superfamily. Protein arginine N-methyltransferase family. In terms of assembly, interacts with the N-terminal regulatory domain of shk1. Shk1, cdc42 and skb1 are able to form a ternary complex in vivo. Interacts with orb6. Interacts with Cdr1 and the Cdr1 inhibitory target Wee1.

The protein resides in the nucleus. It localises to the cell tip. The protein localises to the cell septum. It is found in the cytoplasm. Its subcellular location is the cell cortex. Its function is as follows. S-adenosyl-L-methionine-dependent protein-arginine N-methyltransferase that can catalyze both the mono- and symmetric (type II) dimethylation of the guanidino nitrogens of arginine residues in target proteins. Delays mitotic entry by inhibiting the Cdr1-Wee1 signaling pathway. Cortical nodes sequester Skb1 from its regulatory targets Cdr1 and Wee1. Positively modulates the shk1 kinase function. May be a mediator of hyperosmotic stress response. Involved in the control of cell polarity by regulating the subcellular localization of Orb6 kinase. The polypeptide is Protein arginine N-methyltransferase skb1 (Schizosaccharomyces pombe (strain 972 / ATCC 24843) (Fission yeast)).